A 305-amino-acid chain; its full sequence is Tyrosine recombinase XerC (305 aa).

Residues 4–95 form the Core-binding (CB) domain; sequence TSIQALINKW…AVKNFYRFLE (92 aa). Residues 116 to 298 form the Tyr recombinase domain; the sequence is LLPKALSEDD…SIKHLEAVYT (183 aa). Active-site residues include Arg159, Lys182, His250, Arg253, and His276. The active-site O-(3'-phospho-DNA)-tyrosine intermediate is the Tyr285.

It belongs to the 'phage' integrase family. XerC subfamily. As to quaternary structure, forms a cyclic heterotetrameric complex composed of two molecules of XerC and two molecules of XerD.

Its subcellular location is the cytoplasm. Functionally, site-specific tyrosine recombinase, which acts by catalyzing the cutting and rejoining of the recombining DNA molecules. The XerC-XerD complex is essential to convert dimers of the bacterial chromosome into monomers to permit their segregation at cell division. It also contributes to the segregational stability of plasmids. This Rickettsia rickettsii (strain Iowa) protein is Tyrosine recombinase XerC.